The following is a 266-amino-acid chain: Vitamin B12-binding protein (266 aa).

A signal peptide spans 1–22 (MAKSLFRALVALSFLAPLWLNA). The Fe/B12 periplasmic-binding domain occupies 25–266 (RVITLSPANT…QLCNALSQVD (242 aa)). Residues Y50 and 242-246 (DWFER) each bind cyanocob(III)alamin. C183 and C259 are oxidised to a cystine.

The protein belongs to the BtuF family. The complex is composed of two ATP-binding proteins (BtuD), two transmembrane proteins (BtuC) and a solute-binding protein (BtuF).

The protein resides in the periplasm. Its function is as follows. Part of the ABC transporter complex BtuCDF involved in vitamin B12 import. Binds vitamin B12 and delivers it to the periplasmic surface of BtuC. The chain is Vitamin B12-binding protein (btuF) from Escherichia coli (strain K12).